The chain runs to 445 residues: Deoxyribodipyrimidine photo-lyase (445 aa).

Residues 20–148 (SYVVYWMQAS…QVESNVIVPV (129 aa)) form the Photolyase/cryptochrome alpha/beta domain. A DNA-binding site is contributed by R239.

The protein belongs to the DNA photolyase class-2 family. It depends on FAD as a cofactor. The cofactor is coenzyme F420-(gamma-Glu)n.

The enzyme catalyses cyclobutadipyrimidine (in DNA) = 2 pyrimidine residues (in DNA).. Its function is as follows. Involved in repair of UV radiation-induced DNA damage. Catalyzes the light-dependent monomerization (300-600 nm) of cyclobutyl pyrimidine dimers (in cis-syn configuration), which are formed between adjacent bases on the same DNA strand upon exposure to ultraviolet radiation. In Methanothermobacter thermautotrophicus (strain ATCC 29096 / DSM 1053 / JCM 10044 / NBRC 100330 / Delta H) (Methanobacterium thermoautotrophicum), this protein is Deoxyribodipyrimidine photo-lyase (phr).